The following is a 473-amino-acid chain: Azaphilone pigments biosynthesis cluster protein L (473 aa).

The N-terminal stretch at Met-1–Ser-23 is a signal peptide. ANK repeat units follow at residues Glu-403–Ala-432 and Arg-436–Thr-465. The N-linked (GlcNAc...) asparagine glycan is linked to Asn-462.

In terms of biological role, part of the gene cluster that mediates the biosynthesis of azaphilone pigments (MonAzPs), a complex mixture of compounds with a common azaphilone skeleton very widely used as food colorants. Seems not to play a direct role in the biosynthesis but might have a regulatorx function. The sequence is that of Azaphilone pigments biosynthesis cluster protein L from Monascus ruber (Mold).